Reading from the N-terminus, the 444-residue chain is Phosphoglucosamine mutase (444 aa).

Residue serine 103 is the Phosphoserine intermediate of the active site. Mg(2+) is bound by residues serine 103, aspartate 241, aspartate 243, and aspartate 245. Phosphoserine is present on serine 103.

The protein belongs to the phosphohexose mutase family. The cofactor is Mg(2+). In terms of processing, activated by phosphorylation.

The enzyme catalyses alpha-D-glucosamine 1-phosphate = D-glucosamine 6-phosphate. In terms of biological role, catalyzes the conversion of glucosamine-6-phosphate to glucosamine-1-phosphate. The chain is Phosphoglucosamine mutase from Deinococcus radiodurans (strain ATCC 13939 / DSM 20539 / JCM 16871 / CCUG 27074 / LMG 4051 / NBRC 15346 / NCIMB 9279 / VKM B-1422 / R1).